The primary structure comprises 406 residues: Glutamyl-tRNA reductase (406 aa).

Residues 50–53, S107, 112–114, and Q118 contribute to the substrate site; these read TCNR and EPQ. Residue C51 is the Nucleophile of the active site. 187 to 192 lines the NADP(+) pocket; it reads GAGEMG.

This sequence belongs to the glutamyl-tRNA reductase family. In terms of assembly, homodimer.

The catalysed reaction is (S)-4-amino-5-oxopentanoate + tRNA(Glu) + NADP(+) = L-glutamyl-tRNA(Glu) + NADPH + H(+). It participates in porphyrin-containing compound metabolism; protoporphyrin-IX biosynthesis; 5-aminolevulinate from L-glutamyl-tRNA(Glu): step 1/2. Functionally, catalyzes the NADPH-dependent reduction of glutamyl-tRNA(Glu) to glutamate 1-semialdehyde (GSA). This chain is Glutamyl-tRNA reductase, found in Aquifex aeolicus (strain VF5).